Here is a 261-residue protein sequence, read N- to C-terminus: Segregation and condensation protein A (261 aa).

Belongs to the ScpA family. In terms of assembly, component of a cohesin-like complex composed of ScpA, ScpB and the Smc homodimer, in which ScpA and ScpB bind to the head domain of Smc. The presence of the three proteins is required for the association of the complex with DNA.

Its subcellular location is the cytoplasm. Its function is as follows. Participates in chromosomal partition during cell division. May act via the formation of a condensin-like complex containing Smc and ScpB that pull DNA away from mid-cell into both cell halves. The polypeptide is Segregation and condensation protein A (Ligilactobacillus salivarius (strain UCC118) (Lactobacillus salivarius)).